The sequence spans 295 residues: Putative clathrin assembly protein At5g65370 (295 aa).

One can recognise an ENTH domain in the interval 26–169 (CSSVNAKTID…SIAEVLGITP (144 aa)).

The protein localises to the membrane. Its subcellular location is the clathrin-coated pit. It is found in the golgi apparatus. The protein resides in the cytoplasmic vesicle. It localises to the clathrin-coated vesicle. This is Putative clathrin assembly protein At5g65370 from Arabidopsis thaliana (Mouse-ear cress).